A 457-amino-acid polypeptide reads, in one-letter code: Argininosuccinate lyase (457 aa).

It belongs to the lyase 1 family. Argininosuccinate lyase subfamily.

It localises to the cytoplasm. The enzyme catalyses 2-(N(omega)-L-arginino)succinate = fumarate + L-arginine. It participates in amino-acid biosynthesis; L-arginine biosynthesis; L-arginine from L-ornithine and carbamoyl phosphate: step 3/3. In Erwinia tasmaniensis (strain DSM 17950 / CFBP 7177 / CIP 109463 / NCPPB 4357 / Et1/99), this protein is Argininosuccinate lyase.